Consider the following 605-residue polypeptide: MQLQVMNSPFNQEQAELLNRLLPTLTESQKIWLSGYLSAQSVSAQEAAGTPAAAVSAEAPAPAVSKEVTVLYGSQTGNAQGLAENAGKQLEQSGFQVTVSSMSDFKPNQLKKVTNLLIVVSTHGEGEPPDNALSFHEFLHGRRAPKLEDLRFSVLALGDSSYEFFCQTGKEFDQRLEELGGKRISPRVDCDLDYDEPAAEWLEGVLKGLNEAGGGSAAPAPAAASQTGESSYSRTNPFRAEVLENLNLNGRGSNKETRHVELSLEGSGLTYEPGDSLGVYPENDPELVELLLKEMNWDPEEIVTLNKQGDVRPLKEALISHYEITVLTKPLLEQAAQLTGNDELRELLAPGNEENVKAYIEGRDLLDLVRDYGPFSVSAQEFVSILRKMPARLYSIASSLSANPDEVHLTIGAVRYDAHGRERKGVCSILCAERLQPGDTLPVYVQHNQNFKLPKDPETPIIMVGPGTGVAPFRSFMQEREETGAEGKAWMFFGDQHFVTDFLYQTEWQNWLKDGVLTKMDVAFSRDTEEKVYVQHRMLEHSAELFEWLQEGAAVYICGDEKHMAHDVHNTLLEIIEKEGNMSREEAEAYLADMQQQKRYQRDVY.

Residues 68 to 206 (VTVLYGSQTG…PAAEWLEGVL (139 aa)) enclose the Flavodoxin-like domain. FMN-binding positions include 74–78 (SQTGN), 121–126 (STHGEG), and 154–185 (VLAL…KRIS). The interval 213-234 (GGGSAAPAPAAASQTGESSYSR) is disordered. The FAD-binding FR-type domain occupies 235 to 454 (TNPFRAEVLE…VQHNQNFKLP (220 aa)). An FAD-binding site is contributed by 392–395 (RLYS). NADP(+) contacts are provided by residues Asp495 and 525–533 (SRDTEEKVY).

As to quaternary structure, alpha(8)-beta(8). The alpha component is a flavoprotein, the beta component is a hemoprotein. Requires FAD as cofactor. The cofactor is FMN.

The catalysed reaction is hydrogen sulfide + 3 NADP(+) + 3 H2O = sulfite + 3 NADPH + 4 H(+). It functions in the pathway sulfur metabolism; hydrogen sulfide biosynthesis; hydrogen sulfide from sulfite (NADPH route): step 1/1. Component of the sulfite reductase complex that catalyzes the 6-electron reduction of sulfite to sulfide. This is one of several activities required for the biosynthesis of L-cysteine from sulfate. The flavoprotein component catalyzes the electron flow from NADPH -&gt; FAD -&gt; FMN to the hemoprotein component. This chain is Sulfite reductase [NADPH] flavoprotein alpha-component (cysJ), found in Bacillus subtilis (strain 168).